The following is a 170-amino-acid chain: Probable chemoreceptor glutamine deamidase CheD (170 aa).

Belongs to the CheD family.

The catalysed reaction is L-glutaminyl-[protein] + H2O = L-glutamyl-[protein] + NH4(+). In terms of biological role, probably deamidates glutamine residues to glutamate on methyl-accepting chemotaxis receptors (MCPs), playing an important role in chemotaxis. The chain is Probable chemoreceptor glutamine deamidase CheD from Maridesulfovibrio salexigens (strain ATCC 14822 / DSM 2638 / NCIMB 8403 / VKM B-1763) (Desulfovibrio salexigens).